The following is a 115-amino-acid chain: MRYVASYLLAALGGNSNPSAKDIKKILDSVGIEADDERLNKVISELNGKNIEDVIAQGVGKLASVPAGGAVAVSAAPGSAAPAAGSAPAAAEEKKDEKKEESEESDDDMGFGLFD.

Met1 bears the N-acetylmethionine mark. At Ser19 the chain carries Phosphoserine. Position 21 is an N6-acetyllysine; alternate (Lys21). Lys21 is modified (N6-succinyllysine; alternate). Residues 76 to 90 (APGSAAPAAGSAPAA) show a composition bias toward low complexity. A disordered region spans residues 76 to 115 (APGSAAPAAGSAPAAAEEKKDEKKEESEESDDDMGFGLFD). Residues Ser79 and Ser86 each carry the phosphoserine modification. Positions 91–101 (AEEKKDEKKEE) are enriched in basic and acidic residues. Residues Ser102 and Ser105 each carry the phosphoserine modification.

Belongs to the eukaryotic ribosomal protein P1/P2 family. In terms of assembly, heterodimer with RPLP1 at the lateral ribosomal stalk of the large ribosomal subunit.

In terms of biological role, plays an important role in the elongation step of protein synthesis. The sequence is that of Large ribosomal subunit protein P2 (Rplp2) from Rattus norvegicus (Rat).